The chain runs to 556 residues: Arginine--tRNA ligase (556 aa).

Residues 132-142 carry the 'HIGH' region motif; it reads ANPTGDLHLGH.

It belongs to the class-I aminoacyl-tRNA synthetase family. As to quaternary structure, monomer.

The protein localises to the cytoplasm. The catalysed reaction is tRNA(Arg) + L-arginine + ATP = L-arginyl-tRNA(Arg) + AMP + diphosphate. In Bacillus cereus (strain ATCC 10987 / NRS 248), this protein is Arginine--tRNA ligase.